Here is a 217-residue protein sequence, read N- to C-terminus: Ribosomal RNA small subunit methyltransferase G (217 aa).

S-adenosyl-L-methionine is bound by residues Gly-76, Phe-81, 128–129 (LE), and Arg-142.

Belongs to the methyltransferase superfamily. RNA methyltransferase RsmG family.

It localises to the cytoplasm. The catalysed reaction is guanosine(527) in 16S rRNA + S-adenosyl-L-methionine = N(7)-methylguanosine(527) in 16S rRNA + S-adenosyl-L-homocysteine. In terms of biological role, specifically methylates the N7 position of guanine in position 527 of 16S rRNA. This Rhizorhabdus wittichii (strain DSM 6014 / CCUG 31198 / JCM 15750 / NBRC 105917 / EY 4224 / RW1) (Sphingomonas wittichii) protein is Ribosomal RNA small subunit methyltransferase G.